The following is a 212-amino-acid chain: HTH-type transcriptional regulatory protein RaaS (212 aa).

One can recognise an HTH tetR-type domain in the interval 6–65; it reads LTAHARIREAAIEQFGRHGFGVGLRAIAEAAGVSAALVIHHFGSKEGLRKACDDFVAEEI. The segment at residues 28–47 is a DNA-binding region (H-T-H motif); that stretch reads GLRAIAEAAGVSAALVIHHF.

In terms of assembly, homodimer. Interacts with long chain acyl-CoA derivatives. Interacts with several drugs such rhodamine 6G, ethidium and safranin O.

Interaction with long chain acyl-CoA derivatives (oleoyl-CoA and, to lesser extent, stearoyl-CoA) prevents binding to DNA, leading to the expression of the target genes. Long chain acyl-CoA derivatives may serve as biological indicators of the bacterial metabolic state. In terms of biological role, regulates the expression of the Rv1217c-Rv1218c multidrug efflux system and its own expression. Acts by binding to promoter regions of Rv1219c and upstream of the Rv1218c gene. Important for survival in prolonged stationary phase and during macrophage infection. May be used to eliminate non-growing mycobacteria. The sequence is that of HTH-type transcriptional regulatory protein RaaS from Mycobacterium tuberculosis (strain ATCC 25618 / H37Rv).